Consider the following 375-residue polypeptide: CCN family member 1 (375 aa).

An N-terminal signal peptide occupies residues M1–L22. One can recognise an IGFBP N-terminal domain in the interval G23–Q94. 6 disulfide bridges follow: C26–C50, C30–C52, C32–C53, C39–C56, C64–C78, and C70–C91. Residues R98–D164 form the VWFC domain. The TSP type-1 domain occupies K223–G268. A heparin-binding region spans residues S274–G310. 5 disulfides stabilise this stretch: C281/C318, C298/C332, C309/C348, C312/C350, and C317/C354. In terms of domain architecture, CTCK spans C281 to P355.

Belongs to the CCN family.

It is found in the secreted. In terms of biological role, probable secreted regulatory protein. This Gallus gallus (Chicken) protein is CCN family member 1 (CCN1).